A 396-amino-acid polypeptide reads, in one-letter code: Putative amidohydrolase YhaA (396 aa).

The active site involves Asp-85. Glu-143 (proton acceptor) is an active-site residue. Positions 144, 182, and 368 each coordinate Zn(2+).

Belongs to the peptidase M20A family. Requires Zn(2+) as cofactor. Co(2+) is required as a cofactor.

The polypeptide is Putative amidohydrolase YhaA (yhaA) (Bacillus subtilis (strain 168)).